The following is a 283-amino-acid chain: MRESQLSPIGVFDSGVGGLTVLRELYRQLPQESILYFADTARLPYGTRSKGEIIEFVLEILTWMSERRVKMVIMACNTSSALALEEVQAEFKDLPILGVILPGAKTAVQKGKRIGVISTPATAKSNAYKQAIQEIDPTAQVWQIPCPEFVPLIEANRIFDPYTTQVAREYLQPLLAENIDTLVYGCTHYRHLSPVLRRLLPSSVRLVDPAASVVRAAEKELELLGLKNPETPLPTNFAVSGDPDTFARLSRQWLGFSPRVEKVYLQCRVKTLGFTDGMKQRPV.

Residues 13–14 (DS) and 45–46 (YG) contribute to the substrate site. The active-site Proton donor/acceptor is the cysteine 76. A substrate-binding site is contributed by 77-78 (NT). Cysteine 186 functions as the Proton donor/acceptor in the catalytic mechanism. 187–188 (TH) is a substrate binding site.

The protein belongs to the aspartate/glutamate racemases family.

The catalysed reaction is L-glutamate = D-glutamate. Its pathway is cell wall biogenesis; peptidoglycan biosynthesis. Provides the (R)-glutamate required for cell wall biosynthesis. This chain is Glutamate racemase, found in Microcystis aeruginosa (strain NIES-843 / IAM M-2473).